Here is a 330-residue protein sequence, read N- to C-terminus: Lipoyl synthase (330 aa).

Residues 1–31 are disordered; sequence MSDAPIATSSEVTQSPADYDPTKKQKSAEKT. Polar residues predominate over residues 7–16; that stretch reads ATSSEVTQSP. Residues 20–31 show a composition bias toward basic and acidic residues; sequence DPTKKQKSAEKT. [4Fe-4S] cluster contacts are provided by C77, C82, C88, C103, C107, C110, and S317. Residues 88 to 306 enclose the Radical SAM core domain; it reads CFGKGTATFM…EEEAYKMGFT (219 aa).

This sequence belongs to the radical SAM superfamily. Lipoyl synthase family. It depends on [4Fe-4S] cluster as a cofactor.

The protein resides in the cytoplasm. The enzyme catalyses [[Fe-S] cluster scaffold protein carrying a second [4Fe-4S](2+) cluster] + N(6)-octanoyl-L-lysyl-[protein] + 2 oxidized [2Fe-2S]-[ferredoxin] + 2 S-adenosyl-L-methionine + 4 H(+) = [[Fe-S] cluster scaffold protein] + N(6)-[(R)-dihydrolipoyl]-L-lysyl-[protein] + 4 Fe(3+) + 2 hydrogen sulfide + 2 5'-deoxyadenosine + 2 L-methionine + 2 reduced [2Fe-2S]-[ferredoxin]. It functions in the pathway protein modification; protein lipoylation via endogenous pathway; protein N(6)-(lipoyl)lysine from octanoyl-[acyl-carrier-protein]: step 2/2. Functionally, catalyzes the radical-mediated insertion of two sulfur atoms into the C-6 and C-8 positions of the octanoyl moiety bound to the lipoyl domains of lipoate-dependent enzymes, thereby converting the octanoylated domains into lipoylated derivatives. This Cupriavidus metallidurans (strain ATCC 43123 / DSM 2839 / NBRC 102507 / CH34) (Ralstonia metallidurans) protein is Lipoyl synthase.